Reading from the N-terminus, the 219-residue chain is Pyridoxine/pyridoxamine 5'-phosphate oxidase (219 aa).

The tract at residues 1–23 is disordered; the sequence is MTSSVIPPSPSAADYAAEGDRPL. FMN contacts are provided by residues 66–71, 81–82, K88, and Q110; these read RIVLLK and FT. K71 lines the substrate pocket. Y128, R132, and S136 together coordinate substrate. FMN-binding positions include 145 to 146 and W191; that span reads QS. Residue 197–199 participates in substrate binding; the sequence is RMH. An FMN-binding site is contributed by R201.

Belongs to the pyridoxamine 5'-phosphate oxidase family. As to quaternary structure, homodimer. FMN is required as a cofactor.

The enzyme catalyses pyridoxamine 5'-phosphate + O2 + H2O = pyridoxal 5'-phosphate + H2O2 + NH4(+). The catalysed reaction is pyridoxine 5'-phosphate + O2 = pyridoxal 5'-phosphate + H2O2. It functions in the pathway cofactor metabolism; pyridoxal 5'-phosphate salvage; pyridoxal 5'-phosphate from pyridoxamine 5'-phosphate: step 1/1. It participates in cofactor metabolism; pyridoxal 5'-phosphate salvage; pyridoxal 5'-phosphate from pyridoxine 5'-phosphate: step 1/1. Its function is as follows. Catalyzes the oxidation of either pyridoxine 5'-phosphate (PNP) or pyridoxamine 5'-phosphate (PMP) into pyridoxal 5'-phosphate (PLP). The chain is Pyridoxine/pyridoxamine 5'-phosphate oxidase from Hyphomonas neptunium (strain ATCC 15444).